The primary structure comprises 249 residues: ATP synthase subunit a (249 aa).

Helical transmembrane passes span 29–49 (ASLF…FATS), 84–104 (FFPF…LGMF), 114–134 (IIVT…YGFY), 140–160 (FFGI…VASI), 193–213 (FVAS…LPLI), and 216–236 (VAMT…FAVL).

This sequence belongs to the ATPase A chain family. In terms of assembly, F-type ATPases have 2 components, CF(1) - the catalytic core - and CF(0) - the membrane proton channel. CF(1) has five subunits: alpha(3), beta(3), gamma(1), delta(1), epsilon(1). CF(0) has three main subunits: a(1), b(2) and c(9-12). The alpha and beta chains form an alternating ring which encloses part of the gamma chain. CF(1) is attached to CF(0) by a central stalk formed by the gamma and epsilon chains, while a peripheral stalk is formed by the delta and b chains.

Its subcellular location is the cell inner membrane. Functionally, key component of the proton channel; it plays a direct role in the translocation of protons across the membrane. This Agrobacterium fabrum (strain C58 / ATCC 33970) (Agrobacterium tumefaciens (strain C58)) protein is ATP synthase subunit a.